A 347-amino-acid chain; its full sequence is MSVSGSNPEYVTARVKARESALYDDEEYRKLVRMTPAEIARLMEESDYEREINALGSRYSGVDLIEYALNQNLARQFDDLLRWANGRLYDLIARYLRKFDAWNVKTVIRGIYSGTESDTVNDDLIRAGEFSDELLDTLLDAGSIEEAVERLSAAGTIYGSELESAYDDYDESGVLIPLENAVDRTYYEQLLADLTVDEATAQYREFLEAEIDFRNAQNAFRLAQSGADIDPAAYYIDGGSLFTATELATFAQNRNELIEAIRESRYGDDLSEALNQIETADSLIQFERALDNALLEYSDTLGTVHPLSVTPVVSYILAKEREVDNIRAIARGREAGLSDDEIKQEFM.

It belongs to the V-ATPase V0D/AC39 subunit family. Has multiple subunits with at least A(3), B(3), C, D, E, F, H, I and proteolipid K(x).

The protein localises to the cell membrane. Its function is as follows. Component of the A-type ATP synthase that produces ATP from ADP in the presence of a proton gradient across the membrane. The chain is A-type ATP synthase subunit C from Haloquadratum walsbyi (strain DSM 16790 / HBSQ001).